A 98-amino-acid polypeptide reads, in one-letter code: Plastocyanin (98 aa).

A Plastocyanin-like domain is found at 1–98 (AAIVKLGGDD…AGMKMTITVQ (98 aa)). His-38, Cys-83, His-86, and Met-91 together coordinate Cu cation.

It belongs to the plastocyanin family. Requires Cu(2+) as cofactor.

The protein resides in the plastid. The protein localises to the chloroplast thylakoid membrane. Functionally, participates in electron transfer between P700 and the cytochrome b6-f complex in photosystem I. The sequence is that of Plastocyanin (PETE) from Ulva prolifera (Green seaweed).